We begin with the raw amino-acid sequence, 747 residues long: DNA ligase (747 aa).

NAD(+) is bound by residues 33–37 (DEEYD), 83–84 (SL), and Glu113. Lys115 (N6-AMP-lysine intermediate) is an active-site residue. NAD(+) contacts are provided by Arg136, Glu174, Lys299, and Lys323. Positions 417, 420, 436, and 442 each coordinate Zn(2+). Residues 659 to 747 (TGGGVLSGLT…GPGALPEVAE (89 aa)) form the BRCT domain.

It belongs to the NAD-dependent DNA ligase family. LigA subfamily. Requires Mg(2+) as cofactor. It depends on Mn(2+) as a cofactor.

The catalysed reaction is NAD(+) + (deoxyribonucleotide)n-3'-hydroxyl + 5'-phospho-(deoxyribonucleotide)m = (deoxyribonucleotide)n+m + AMP + beta-nicotinamide D-nucleotide.. Its function is as follows. DNA ligase that catalyzes the formation of phosphodiester linkages between 5'-phosphoryl and 3'-hydroxyl groups in double-stranded DNA using NAD as a coenzyme and as the energy source for the reaction. It is essential for DNA replication and repair of damaged DNA. This Leifsonia xyli subsp. xyli (strain CTCB07) protein is DNA ligase.